A 234-amino-acid polypeptide reads, in one-letter code: Large ribosomal subunit protein uL1 (234 aa).

Belongs to the universal ribosomal protein uL1 family. In terms of assembly, part of the 50S ribosomal subunit.

Binds directly to 23S rRNA. The L1 stalk is quite mobile in the ribosome, and is involved in E site tRNA release. In terms of biological role, protein L1 is also a translational repressor protein, it controls the translation of the L11 operon by binding to its mRNA. This chain is Large ribosomal subunit protein uL1, found in Serratia marcescens.